The primary structure comprises 204 residues: MASPDDPEDYQDRAAPAAHRVRAGTMLLANTDLLEPTFRRSVIYVVEHNDGGTLGVVLNRASETAVYNVLPQWAKLAVKPKTMFIGGPVKRDAALCLGTLRVGSDPVGVPGLRHVQGRIVMVDLDADPDELAPILEGVRIFAGYSGWTIGQLEGEIERDDWIVLSALPTDVLVEPKVDLWARILRRQPMPLSLLATHPIDLSRN.

This sequence belongs to the UPF0301 (AlgH) family.

The sequence is that of UPF0301 protein Mflv_0850 from Mycolicibacterium gilvum (strain PYR-GCK) (Mycobacterium gilvum (strain PYR-GCK)).